The primary structure comprises 250 residues: Small ribosomal subunit protein uS3 (250 aa).

Positions isoleucine 39–lysine 111 constitute a KH type-2 domain.

The protein belongs to the universal ribosomal protein uS3 family. As to quaternary structure, part of the 30S ribosomal subunit. Forms a tight complex with proteins S10 and S14.

In terms of biological role, binds the lower part of the 30S subunit head. Binds mRNA in the 70S ribosome, positioning it for translation. The polypeptide is Small ribosomal subunit protein uS3 (Elm witches'-broom phytoplasma).